The sequence spans 266 residues: Apolipoprotein A-I (266 aa).

Residues 1–18 (MKAALLTLAVLFLTGSQA) form the signal peptide. 2 consecutive repeat copies span residues 67–88 (LKLL…EQIG) and 89–110 (PVTQ…QEMS). Residues 67–266 (LKLLDNWDSL…DEATKKLNAQ (200 aa)) form a 10 X approximate tandem repeats region. Methionine 109 is subject to Methionine sulfoxide. The stretch at 111–121 (KDLEEVKQKVQ) is one 3; half-length repeat. 5 repeat units span residues 122-143 (PYLD…QKVA), 144-165 (PLGS…EKLS), 166-187 (PLAE…AQLA), 188-209 (PYSD…EGGG), and 210-231 (ASLA…EKAR). The 9; half-length repeat unit spans residues 232–242 (PALEDLRQGLL). Residues 243-266 (PVLESFKVSLLAAIDEATKKLNAQ) form repeat 10.

It belongs to the apolipoprotein A1/A4/E family. As to quaternary structure, homodimer. Interacts with APOA1BP and CLU. Component of a sperm activating protein complex (SPAP), consisting of APOA1, an immunoglobulin heavy chain, an immunoglobulin light chain and albumin. Interacts with NDRG1. Interacts with SCGB3A2. Interacts with NAXE and YJEFN3. Palmitoylated. In terms of processing, glycosylated. Post-translationally, phosphorylation sites are present in the extracellular medium. Major protein of plasma HDL, also found in chylomicrons. Synthesized in the liver and small intestine.

It localises to the secreted. In terms of biological role, participates in the reverse transport of cholesterol from tissues to the liver for excretion by promoting cholesterol efflux from tissues and by acting as a cofactor for the lecithin cholesterol acyltransferase (LCAT). As part of the SPAP complex, activates spermatozoa motility. This is Apolipoprotein A-I (APOA1) from Canis lupus familiaris (Dog).